The sequence spans 169 residues: Ribosome maturation factor RimP (169 aa).

The protein belongs to the RimP family.

It is found in the cytoplasm. Functionally, required for maturation of 30S ribosomal subunits. The chain is Ribosome maturation factor RimP from Coprothermobacter proteolyticus (strain ATCC 35245 / DSM 5265 / OCM 4 / BT).